We begin with the raw amino-acid sequence, 374 residues long: DNA replication and repair protein RecF (374 aa).

34–41 serves as a coordination point for ATP; the sequence is GDNGAGKT.

Belongs to the RecF family.

It localises to the cytoplasm. The RecF protein is involved in DNA metabolism; it is required for DNA replication and normal SOS inducibility. RecF binds preferentially to single-stranded, linear DNA. It also seems to bind ATP. This Rhizobium etli (strain ATCC 51251 / DSM 11541 / JCM 21823 / NBRC 15573 / CFN 42) protein is DNA replication and repair protein RecF.